The primary structure comprises 279 residues: Octanoyl-[GcvH]:protein N-octanoyltransferase (279 aa).

In terms of domain architecture, BPL/LPL catalytic spans 48–253 (ETSPPVIRLW…TLEKLSDEIV (206 aa)). Cys152 functions as the Acyl-thioester intermediate in the catalytic mechanism.

It belongs to the octanoyltransferase LipL family.

It carries out the reaction N(6)-octanoyl-L-lysyl-[glycine-cleavage complex H protein] + L-lysyl-[lipoyl-carrier protein] = N(6)-octanoyl-L-lysyl-[lipoyl-carrier protein] + L-lysyl-[glycine-cleavage complex H protein]. It functions in the pathway protein modification; protein lipoylation via endogenous pathway; protein N(6)-(lipoyl)lysine from octanoyl-[acyl-carrier-protein]. Its function is as follows. Catalyzes the amidotransfer (transamidation) of the octanoyl moiety from octanoyl-GcvH to the lipoyl domain of the E2 subunit of lipoate-dependent enzymes. This chain is Octanoyl-[GcvH]:protein N-octanoyltransferase, found in Oceanobacillus iheyensis (strain DSM 14371 / CIP 107618 / JCM 11309 / KCTC 3954 / HTE831).